Here is a 663-residue protein sequence, read N- to C-terminus: MKLLFKRYSSSHIGKLIKDSLITPEILPQLGRQPSSHKRLPNNKRTNSITDKWLKDALTRKDKLNEDKLQNVNLRLNVVLTTLQKLRTSDNPALYFALLNRIGTGHIKWLNKSGRQIDAFPPDRLPLEFYHELSNMLYKLSLRSANDKIALAKFSLQLLDRYYFLKTKSLTIEGKFRANIKFLRNCTLLIVKSQSNYYLRAIQRLFAENSEGQLLANLSQLAFYVETSQWTSMLDILSSCVPDSGLRGSKERERAIQLLELFSPCLVKSLKVMIAQNMENEACQILRSLSEWNFHFDQHDSSNLIQLSQNHSCLKVIETMNGLSSTTAVTRQFGLEKLPTDVSLKQSIHILSKDNFEPLKQDSFLQFLSFKLSDLPLNLEVWKKHIKEVDDQMQAESNLHSLRAFFIDMLLCHLSVRKDFDFMLSLVEHIVYEKNLWQPLLLTDNIVGNKENSTFHCLFHGASQDISTKLTLLALYNQLNEIGYQFTSHDFLSMLKVCKNYSDSDFFYFAFYNLLVTQSHKFFLFDKFSDKFSWRLPIQIGDAISEWLSSLEIDIQENTDRVLQITDDVGEWYVENKPFKSEKGTIQPINIMELRKIFGERKTLFHMDSEIFQKSKAKRDKEMRNEALFTANDAEYNFAADVSYAKRVENLFSYIRSKQMQQK.

This Saccharomyces cerevisiae (strain ATCC 204508 / S288c) (Baker's yeast) protein is Protein MNE1 (MNE1).